A 141-amino-acid chain; its full sequence is Nucleoside triphosphatase NudI (141 aa).

Positions 1–141 (MRQRTIVCPL…RHTLALKGLL (141 aa)) constitute a Nudix hydrolase domain. The Nudix box motif lies at 38–59 (GGVEPGERIEEALRREIREELG).

Belongs to the Nudix hydrolase family. NudI subfamily. Monomer. It depends on Mg(2+) as a cofactor.

It catalyses the reaction a ribonucleoside 5'-triphosphate + H2O = a ribonucleoside 5'-phosphate + diphosphate + H(+). The catalysed reaction is a 2'-deoxyribonucleoside 5'-triphosphate + H2O = a 2'-deoxyribonucleoside 5'-phosphate + diphosphate + H(+). The enzyme catalyses dUTP + H2O = dUMP + diphosphate + H(+). It carries out the reaction dTTP + H2O = dTMP + diphosphate + H(+). It catalyses the reaction dCTP + H2O = dCMP + diphosphate + H(+). Catalyzes the hydrolysis of nucleoside triphosphates, with a preference for pyrimidine deoxynucleoside triphosphates (dUTP, dTTP and dCTP). This is Nucleoside triphosphatase NudI from Salmonella paratyphi B (strain ATCC BAA-1250 / SPB7).